The following is a 343-amino-acid chain: Flap endonuclease 1 (343 aa).

The interval 1 to 98 is N-domain; that stretch reads MGVPIGELIP…KELEKRREAR (98 aa). 7 residues coordinate Mg(2+): D27, D80, E152, E154, D173, D175, and D236. An I-domain region spans residues 116–258; sequence EARKYAQRAT…KALEIVKYSK (143 aa). The interval 330 to 338 is interaction with PCNA; the sequence is KQSTLESWF.

Belongs to the XPG/RAD2 endonuclease family. FEN1 subfamily. In terms of assembly, interacts with PCNA. PCNA stimulates the nuclease activity without altering cleavage specificity. It depends on Mg(2+) as a cofactor.

Structure-specific nuclease with 5'-flap endonuclease and 5'-3' exonuclease activities involved in DNA replication and repair. During DNA replication, cleaves the 5'-overhanging flap structure that is generated by displacement synthesis when DNA polymerase encounters the 5'-end of a downstream Okazaki fragment. Binds the unpaired 3'-DNA end and kinks the DNA to facilitate 5' cleavage specificity. Cleaves one nucleotide into the double-stranded DNA from the junction in flap DNA, leaving a nick for ligation. Also involved in the base excision repair (BER) pathway. Acts as a genome stabilization factor that prevents flaps from equilibrating into structures that lead to duplications and deletions. Also possesses 5'-3' exonuclease activity on nicked or gapped double-stranded DNA. This is Flap endonuclease 1 from Pyrococcus abyssi (strain GE5 / Orsay).